We begin with the raw amino-acid sequence, 356 residues long: Thrombopoietin (356 aa).

A signal peptide spans Met-1–Ser-21. 2 disulfide bridges follow: Cys-28–Cys-172 and Cys-50–Cys-106. Residues Asn-197, Asn-206, Asn-235, Asn-249, Asn-256, Asn-336, and Asn-351 are each glycosylated (N-linked (GlcNAc...) asparagine). A disordered region spans residues Gly-291–Thr-356. Residues Pro-330 to Ala-339 show a composition bias toward polar residues.

Belongs to the EPO/TPO family. Found mainly in the liver, kidney and skeletal muscle.

It is found in the secreted. Functionally, lineage-specific cytokine affecting the proliferation and maturation of megakaryocytes from their committed progenitor cells. It acts at a late stage of megakaryocyte development. It may be the major physiological regulator of circulating platelets. The protein is Thrombopoietin (Thpo) of Mus musculus (Mouse).